We begin with the raw amino-acid sequence, 488 residues long: Aspartyl/glutamyl-tRNA(Asn/Gln) amidotransferase subunit B (488 aa).

It belongs to the GatB/GatE family. GatB subfamily. As to quaternary structure, heterotrimer of A, B and C subunits.

It catalyses the reaction L-glutamyl-tRNA(Gln) + L-glutamine + ATP + H2O = L-glutaminyl-tRNA(Gln) + L-glutamate + ADP + phosphate + H(+). The catalysed reaction is L-aspartyl-tRNA(Asn) + L-glutamine + ATP + H2O = L-asparaginyl-tRNA(Asn) + L-glutamate + ADP + phosphate + 2 H(+). Its function is as follows. Allows the formation of correctly charged Asn-tRNA(Asn) or Gln-tRNA(Gln) through the transamidation of misacylated Asp-tRNA(Asn) or Glu-tRNA(Gln) in organisms which lack either or both of asparaginyl-tRNA or glutaminyl-tRNA synthetases. The reaction takes place in the presence of glutamine and ATP through an activated phospho-Asp-tRNA(Asn) or phospho-Glu-tRNA(Gln). This chain is Aspartyl/glutamyl-tRNA(Asn/Gln) amidotransferase subunit B, found in Chlamydia trachomatis serovar L2 (strain ATCC VR-902B / DSM 19102 / 434/Bu).